The chain runs to 226 residues: ATP synthase F(0) complex subunit a (226 aa).

The next 5 helical transmembrane spans lie at 9–29 (FITP…FPSL), 68–88 (WTLM…LGLL), 97–117 (QLSM…ITGF), 138–158 (IPML…ALAV), and 184–204 (ISPT…ILEF).

Belongs to the ATPase A chain family. As to quaternary structure, component of the ATP synthase complex composed at least of ATP5F1A/subunit alpha, ATP5F1B/subunit beta, ATP5MC1/subunit c (homooctomer), MT-ATP6/subunit a, MT-ATP8/subunit 8, ATP5ME/subunit e, ATP5MF/subunit f, ATP5MG/subunit g, ATP5MK/subunit k, ATP5MJ/subunit j, ATP5F1C/subunit gamma, ATP5F1D/subunit delta, ATP5F1E/subunit epsilon, ATP5PF/subunit F6, ATP5PB/subunit b, ATP5PD/subunit d, ATP5PO/subunit OSCP. ATP synthase complex consists of a soluble F(1) head domain (subunits alpha(3) and beta(3)) - the catalytic core - and a membrane F(0) domain - the membrane proton channel (subunits c, a, 8, e, f, g, k and j). These two domains are linked by a central stalk (subunits gamma, delta, and epsilon) rotating inside the F1 region and a stationary peripheral stalk (subunits F6, b, d, and OSCP). Interacts with DNAJC30; interaction is direct.

It is found in the mitochondrion inner membrane. It carries out the reaction H(+)(in) = H(+)(out). Functionally, subunit a, of the mitochondrial membrane ATP synthase complex (F(1)F(0) ATP synthase or Complex V) that produces ATP from ADP in the presence of a proton gradient across the membrane which is generated by electron transport complexes of the respiratory chain. ATP synthase complex consist of a soluble F(1) head domain - the catalytic core - and a membrane F(1) domain - the membrane proton channel. These two domains are linked by a central stalk rotating inside the F(1) region and a stationary peripheral stalk. During catalysis, ATP synthesis in the catalytic domain of F(1) is coupled via a rotary mechanism of the central stalk subunits to proton translocation. With the subunit c (ATP5MC1), forms the proton-conducting channel in the F(0) domain, that contains two crucial half-channels (inlet and outlet) that facilitate proton movement from the mitochondrial intermembrane space (IMS) into the matrix. Protons are taken up via the inlet half-channel and released through the outlet half-channel, following a Grotthuss mechanism. In Capra hircus (Goat), this protein is ATP synthase F(0) complex subunit a.